Reading from the N-terminus, the 240-residue chain is MRSSVLRSLRGRLVINLESTRKLRLSRTNIVPGRKKGQKSIKSKNMARKGNPILVRLGKNRSSDSSWFSAEALLGCLYFFIYFVAPTLGPVLFLLRLIHFVWGLRLGLGNENFHFGVGPDGGATGLDLNQPPQEQQPTLGVNRAALDLNELPPVHLLYAEVEGPQSTKAQNDVMLAHLNQVQNLTRDLQTEPNIWRRQALIDILDWEVRSLQRHFRIFRQRDRLREVQRSWLREQLNRYR.

A helical membrane pass occupies residues 73 to 93 (LLGCLYFFIYFVAPTLGPVLF).

It belongs to the universal ribosomal protein uS3 family.

The protein localises to the mitochondrion membrane. This is an uncharacterized protein from Arabidopsis thaliana (Mouse-ear cress).